A 266-amino-acid chain; its full sequence is Translation initiation factor 2 subunit alpha (266 aa).

Positions 12 to 83 (GEILIATVKQ…RKGTVDVSLK (72 aa)) constitute an S1 motif domain.

This sequence belongs to the eIF-2-alpha family. Heterotrimer composed of an alpha, a beta and a gamma chain.

In terms of biological role, eIF-2 functions in the early steps of protein synthesis by forming a ternary complex with GTP and initiator tRNA. In Saccharolobus islandicus (strain M.16.27) (Sulfolobus islandicus), this protein is Translation initiation factor 2 subunit alpha.